We begin with the raw amino-acid sequence, 500 residues long: MSSFPWLTIIVVLPIFAGSSIFFLPHRGNKIVRWYTICICLLELLLTTYTFCYHFQLDDPLIQLEEDYKWINIFDFHWRLGIDGLSIGPILLTGFITTLATLAARPVTRDSRLFHFLMLAMYSGQIGSFSSRDLLLFFIMWELELIPVYLLLSMWGGKKRLYSATKFILYTAGGSIFLLMGIPGMGLYGSNQPPFNFETSANQSYPVALEILFYFGFLIAYAVKSPIIPLHTWLPDTHGEAHYSTCMLLAGILLKMGAYGLVRINMELLPHAHSIFSPWLMIVGTIQVIYAASTSPGQRNLKKRIAYSSVSHMAFIIIGIGSITDTGLNGAILQIISHGFIGAALFFLAGTSYDRIRLIYLDEMGGIAIPMPKIFTMFSSFSMASLALPGMSGFVAESIVFFGIITSPKYFFMPKILITFVMAIGMILTPIYSLSMSRQMFYGYKLFNVPNSYFVDSGPRELFVSICIFLPVIGIGIYPDFVLSLSVDKVEAILSNYFHR.

14 helical membrane passes run 4-24 (FPWL…IFFL), 37-57 (ICIC…HFQL), 84-104 (GLSI…TLAA), 111-129 (SRLF…IGSF), 134-154 (LLLF…LLSM), 167-187 (FILY…GMGL), 208-228 (ALEI…SPII), 242-262 (HYST…YGLV), 272-292 (AHSI…IYAA), 305-325 (IAYS…SITD), 330-350 (GAIL…FLAG), 374-396 (IFTM…GFVA), 411-431 (FFMP…LTPI), and 462-482 (LFVS…PDFV).

Belongs to the complex I subunit 4 family.

Its subcellular location is the plastid. The protein resides in the chloroplast thylakoid membrane. It carries out the reaction a plastoquinone + NADH + (n+1) H(+)(in) = a plastoquinol + NAD(+) + n H(+)(out). The catalysed reaction is a plastoquinone + NADPH + (n+1) H(+)(in) = a plastoquinol + NADP(+) + n H(+)(out). The polypeptide is NAD(P)H-quinone oxidoreductase chain 4, chloroplastic (Chloranthus spicatus (Chulantree)).